The sequence spans 93 residues: LSM complex subunit lsm3 (93 aa).

The region spanning 9–93 is the Sm domain; sequence EPLDLVRLSL…SVILIAPPRN (85 aa). A Phosphoserine modification is found at Ser84.

It belongs to the snRNP Sm proteins family. Component of the heptameric LSM1-LSM7 complex that forms a seven-membered ring structure with a donut shape. The LSm subunits are arranged in the order lsm1, lsm2, lsm3, lsm6, lsm5, lsm7 and lsm4. Component of the heptameric LSM2-LSM8 complex that forms a seven-membered ring structure with a donut shape. The LSm subunits are arranged in the order lsm8, lsm2, lsm3, lsm6, lsm5, lsm7 and lsm4.

The protein localises to the nucleus. The protein resides in the cytoplasm. Its function is as follows. Component of LSm protein complexes, which are involved in RNA processing and may function in a chaperone-like manner. Component of the cytoplasmic LSM1-LSM7 complex which is involved in mRNA degradation by activating the decapping step. The LSM1-LSM7 complex loads onto the 3'-end of single stranded RNA. Component of the nuclear LSM2-LSM8 complex, which is involved in spliceosome assembly. The LSM2-LSM8 complex plays a role in the biogenesis of the spliceosomal U4/U6-U5 tri-snRNP complex by accelerating prp24-mediated annealing of U4/U6 di-snRNA. The LSM2-LSM8 complex binds U6 snRNA terminating with a cyclic 2',3' phosphate group; RNA with an unmodified 3' hydroxyl or non-cyclic 3' phosphate is bound less tightly. The protein is LSM complex subunit lsm3 (lsm3) of Schizosaccharomyces pombe (strain 972 / ATCC 24843) (Fission yeast).